A 477-amino-acid chain; its full sequence is Glycogen synthase (477 aa).

Lys15 provides a ligand contact to ADP-alpha-D-glucose.

It belongs to the glycosyltransferase 1 family. Bacterial/plant glycogen synthase subfamily.

The catalysed reaction is [(1-&gt;4)-alpha-D-glucosyl](n) + ADP-alpha-D-glucose = [(1-&gt;4)-alpha-D-glucosyl](n+1) + ADP + H(+). It functions in the pathway glycan biosynthesis; glycogen biosynthesis. Its function is as follows. Synthesizes alpha-1,4-glucan chains using ADP-glucose. The protein is Glycogen synthase of Serratia proteamaculans (strain 568).